The sequence spans 540 residues: Phenylalanine--tRNA ligase beta subunit (540 aa).

One can recognise a B5 domain in the interval 268–342; it reads LRHTSVPFSL…MAYGYDRFTL (75 aa). The Mg(2+) site is built by D320, D326, E329, and D330.

It belongs to the phenylalanyl-tRNA synthetase beta subunit family. Type 2 subfamily. In terms of assembly, tetramer of two alpha and two beta subunits. Mg(2+) is required as a cofactor.

It is found in the cytoplasm. It carries out the reaction tRNA(Phe) + L-phenylalanine + ATP = L-phenylalanyl-tRNA(Phe) + AMP + diphosphate + H(+). The chain is Phenylalanine--tRNA ligase beta subunit from Metallosphaera sedula (strain ATCC 51363 / DSM 5348 / JCM 9185 / NBRC 15509 / TH2).